Consider the following 941-residue polypeptide: ATP-dependent 6-phosphofructokinase subunit beta (941 aa).

The N-terminal catalytic PFK domain 1 stretch occupies residues 2–558 (PDASLFNGTS…HMKNFISTNS (557 aa)). ATP-binding positions include Gly191, 255-256 (RC), and 285-288 (GDGS). Asp286 serves as a coordination point for Mg(2+). Beta-D-fructose 6-phosphate is bound by residues 331-333 (SID), Arg368, and 375-377 (MGR). Asp333 (proton acceptor) is an active-site residue. ATP is bound by residues Ile395, 400 to 405 (KPASSR), and Gln410. Residues Glu432, Arg460, and 466–469 (HVQR) each bind beta-D-fructose 6-phosphate. 557 to 558 (NS) is an ATP binding site. Residues 559 to 572 (ADHVPPSLPLEKRK) are interdomain linker. A C-terminal regulatory PFK domain 2 region spans residues 573–941 (KIAIINVGAP…SDMLSGRTSL (369 aa)). Residues Arg643, 701–705 (TISNN), Arg739, 746–748 (QGG), Glu806, Lys832, 838–841 (HVQQ), and Arg918 each bind beta-D-fructose 2,6-bisphosphate.

Belongs to the phosphofructokinase type A (PFKA) family. ATP-dependent PFK group I subfamily. Eukaryotic two domain clade 'E' sub-subfamily. Heterododecamer of 4 alpha, 4 beta and 4 gamma chains. The cofactor is Mg(2+).

It is found in the cytoplasm. The enzyme catalyses beta-D-fructose 6-phosphate + ATP = beta-D-fructose 1,6-bisphosphate + ADP + H(+). It functions in the pathway carbohydrate degradation; glycolysis; D-glyceraldehyde 3-phosphate and glycerone phosphate from D-glucose: step 3/4. Its activity is regulated as follows. Allosterically activated by ADP, AMP, or fructose 2,6-bisphosphate, and allosterically inhibited by ATP or citrate. Catalyzes the phosphorylation of D-fructose 6-phosphate to fructose 1,6-bisphosphate by ATP, the first committing step of glycolysis. The sequence is that of ATP-dependent 6-phosphofructokinase subunit beta (PFK2) from Komagataella pastoris (Yeast).